The chain runs to 947 residues: Protein translocase subunit SecA 1 (947 aa).

Residues Gln83, 101 to 105 (GEGKT), and Asp490 contribute to the ATP site. Positions 860-947 (AKAQEQTGQG…KTSKPTRRRG (88 aa)) are disordered. Positions 925-934 (TRRERREAAR) are enriched in basic and acidic residues. Residues 935-947 (KQAKTSKPTRRRG) show a composition bias toward basic residues.

The protein belongs to the SecA family. In terms of assembly, monomer and homodimer. Part of the essential Sec protein translocation apparatus which comprises SecA, SecYEG and auxiliary proteins SecDF. Other proteins may also be involved.

Its subcellular location is the cell membrane. It is found in the cytoplasm. It catalyses the reaction ATP + H2O + cellular proteinSide 1 = ADP + phosphate + cellular proteinSide 2.. In terms of biological role, part of the Sec protein translocase complex. Interacts with the SecYEG preprotein conducting channel. Has a central role in coupling the hydrolysis of ATP to the transfer of proteins into and across the cell membrane, serving as an ATP-driven molecular motor driving the stepwise translocation of polypeptide chains across the membrane. This chain is Protein translocase subunit SecA 1, found in Mycobacterium sp. (strain KMS).